A 79-amino-acid chain; its full sequence is Cell division protein ZapB (79 aa).

A coiled-coil region spans residues 4 to 78 (EVFEKLEAKV…LRALLGKMEE (75 aa)).

The protein belongs to the ZapB family. As to quaternary structure, homodimer. The ends of the coiled-coil dimer bind to each other, forming polymers. Interacts with FtsZ.

The protein resides in the cytoplasm. Its function is as follows. Non-essential, abundant cell division factor that is required for proper Z-ring formation. It is recruited early to the divisome by direct interaction with FtsZ, stimulating Z-ring assembly and thereby promoting cell division earlier in the cell cycle. Its recruitment to the Z-ring requires functional FtsA or ZipA. This is Cell division protein ZapB from Pectobacterium carotovorum subsp. carotovorum (strain PC1).